We begin with the raw amino-acid sequence, 279 residues long: Ribosomal RNA small subunit methyltransferase A (279 aa).

S-adenosyl-L-methionine is bound by residues asparagine 28, leucine 30, glycine 55, glutamate 77, aspartate 103, and asparagine 122.

This sequence belongs to the class I-like SAM-binding methyltransferase superfamily. rRNA adenine N(6)-methyltransferase family. RsmA subfamily.

The protein resides in the cytoplasm. It carries out the reaction adenosine(1518)/adenosine(1519) in 16S rRNA + 4 S-adenosyl-L-methionine = N(6)-dimethyladenosine(1518)/N(6)-dimethyladenosine(1519) in 16S rRNA + 4 S-adenosyl-L-homocysteine + 4 H(+). Its function is as follows. Specifically dimethylates two adjacent adenosines (A1518 and A1519) in the loop of a conserved hairpin near the 3'-end of 16S rRNA in the 30S particle. May play a critical role in biogenesis of 30S subunits. In Ruegeria pomeroyi (strain ATCC 700808 / DSM 15171 / DSS-3) (Silicibacter pomeroyi), this protein is Ribosomal RNA small subunit methyltransferase A.